The primary structure comprises 151 residues: Transcriptional repressor NrdR (151 aa).

A zinc finger spans residues 3–34; the sequence is CPFCSSDNTRVIDSRPADDNSSIRRRRLCDDC. One can recognise an ATP-cone domain in the interval 49 to 139; sequence LIVIKKDNNR…VYREFKDVNT (91 aa).

The protein belongs to the NrdR family. The cofactor is Zn(2+).

Its function is as follows. Negatively regulates transcription of bacterial ribonucleotide reductase nrd genes and operons by binding to NrdR-boxes. The chain is Transcriptional repressor NrdR from Agathobacter rectalis (strain ATCC 33656 / DSM 3377 / JCM 17463 / KCTC 5835 / VPI 0990) (Eubacterium rectale).